Consider the following 166-residue polypeptide: UPF0561 protein C2orf68 (166 aa).

A disordered region spans residues 32 to 107; the sequence is NQIARDDYDK…SELEPSGHQL (76 aa). 2 stretches are compositionally biased toward basic and acidic residues: residues 34–49 and 73–85; these read IARD…AAKE and RHRD…RNPD. The span at 91 to 104 shows a compositional bias: low complexity; that stretch reads ESSSSGGSELEPSG.

It belongs to the UPF0561 family.

The sequence is that of UPF0561 protein C2orf68 (C2orf68) from Homo sapiens (Human).